The primary structure comprises 218 residues: 4-coumaroyl-homoserine lactone synthase (218 aa).

This sequence belongs to the autoinducer synthase family.

It catalyses the reaction 4-coumaroyl-CoA + S-adenosyl-L-methionine = N-(4-coumaroyl)-L-homoserine lactone + S-methyl-5'-thioadenosine + CoA + H(+). Functionally, catalyzes the synthesis of 4-coumaroyl-homoserine lactone, a quorum-sensing (QS) autoinducer molecule which binds to RpaR transcriptional regulator to regulate expression of QS-dependent genes. This Rhodopseudomonas palustris (strain ATCC BAA-98 / CGA009) protein is 4-coumaroyl-homoserine lactone synthase.